A 325-amino-acid chain; its full sequence is GMP reductase (325 aa).

Cys-174 functions as the Thioimidate intermediate in the catalytic mechanism. 203–226 (IIADGGIRTHGDIAKSVRFGATMV) is an NADP(+) binding site.

It belongs to the IMPDH/GMPR family. GuaC type 2 subfamily.

It carries out the reaction IMP + NH4(+) + NADP(+) = GMP + NADPH + 2 H(+). Catalyzes the irreversible NADPH-dependent deamination of GMP to IMP. It functions in the conversion of nucleobase, nucleoside and nucleotide derivatives of G to A nucleotides, and in maintaining the intracellular balance of A and G nucleotides. In Enterococcus faecalis (strain ATCC 700802 / V583), this protein is GMP reductase.